Consider the following 215-residue polypeptide: Ras-related protein Rab-14 (215 aa).

N-acetylalanine is present on A2. Residues G21, V22, G23, K24, S25, C26, A38, D39, C40, H42, and T43 each contribute to the GTP site. S25 lines the Mg(2+) pocket. Residues 42–47 (HTIGVE) carry the Switch 1 motif. Mg(2+)-binding residues include T43 and D66. A Switch 2 motif is present at residues 68-77 (AGQERFRAVT). GTP contacts are provided by G69, N124, K125, D127, A155, and K156. Residues 188-215 (SGVQHKPSAPQGGRLTSEPQPQREGCGC) are disordered. 2 S-geranylgeranyl cysteine lipidation sites follow: C213 and C215. C215 is modified (cysteine methyl ester).

The protein belongs to the small GTPase superfamily. Rab family. Interacts with ZFYVE20. Interacts with KIF16B. Interacts (GTP-bound form) with RUFY1; the interaction recruits RUFY1 onto endosomal membranes. Interacts (GTP-bound form) with RAB11FIP1 (via its C-terminus); the interactions doesn't mediate RAB11FIP1 rectruitment to membranes. Interacts with RAB11FIP2. It depends on Mg(2+) as a cofactor.

It is found in the recycling endosome. The protein localises to the early endosome membrane. Its subcellular location is the golgi apparatus membrane. It localises to the golgi apparatus. The protein resides in the trans-Golgi network membrane. It is found in the cytoplasmic vesicle. The protein localises to the phagosome. It carries out the reaction GTP + H2O = GDP + phosphate + H(+). Its activity is regulated as follows. Regulated by guanine nucleotide exchange factors (GEFs) including DENND6A and DENND6B which promote the exchange of bound GDP for free GTP. Regulated by GTPase activating proteins (GAPs) which increase the GTP hydrolysis activity. Inhibited by GDP dissociation inhibitors (GDIs) which prevent Rab-GDP dissociation. Its function is as follows. The small GTPases Rab are key regulators of intracellular membrane trafficking, from the formation of transport vesicles to their fusion with membranes. Rabs cycle between an inactive GDP-bound form and an active GTP-bound form that is able to recruit to membranes different set of downstream effectors directly responsible for vesicle formation, movement, tethering and fusion. Involved in membrane trafficking between the Golgi complex and endosomes during early embryonic development. Regulates the Golgi to endosome transport of FGFR-containing vesicles during early development, a key process for developing basement membrane and epiblast and primitive endoderm lineages during early postimplantation development. May act by modulating the kinesin KIF16B-cargo association to endosomes. Regulates, together with its guanine nucleotide exchange factor DENND6A, the specific endocytic transport of ADAM10, N-cadherin/CDH2 shedding and cell-cell adhesion. Mediates endosomal tethering and fusion through the interaction with RUFY1 and RAB4B. Interaction with RAB11FIP1 may function in the process of neurite formation. The protein is Ras-related protein Rab-14 (RAB14) of Sus scrofa (Pig).